The chain runs to 432 residues: Histidine--tRNA ligase (432 aa).

Belongs to the class-II aminoacyl-tRNA synthetase family.

The protein localises to the cytoplasm. It carries out the reaction tRNA(His) + L-histidine + ATP = L-histidyl-tRNA(His) + AMP + diphosphate + H(+). The polypeptide is Histidine--tRNA ligase (Halobacterium salinarum (strain ATCC 29341 / DSM 671 / R1)).